Reading from the N-terminus, the 225-residue chain is Thaumatin-like protein (225 aa).

The first 24 residues, 1–24 (MSTFKSLSLSALLFIAFLFTCARG), serve as a signal peptide directing secretion. 8 cysteine pairs are disulfide-bonded: Cys-33-Cys-224, Cys-74-Cys-84, Cys-89-Cys-95, Cys-140-Cys-213, Cys-146-Cys-196, Cys-154-Cys-164, Cys-168-Cys-177, and Cys-178-Cys-183. An N-linked (GlcNAc...) asparagine glycan is attached at Asn-187.

Belongs to the thaumatin family. Post-translationally, N-glycosylated. As to expression, woody stem plug.

It is found in the secreted. Has antifungal activity. In Actinidia deliciosa (Kiwi), this protein is Thaumatin-like protein (tlp).